We begin with the raw amino-acid sequence, 470 residues long: MFCHLHCMLVVFSLLLTLTGSFVNAQTTEVVTEITATTADPPDPCASNPCTIASTHCVAAGESHTCECRPGYFETNGNCTVAQQFAGSFSVTQVGGSNVLYSADLADTDSAAFASLAADVEDALDTVYQASTMADIYLGSEVWGVPEWLYRGRLHVLFATEDAGQPVLVNSTDATEAFTTALAAEAANLGITIDDSTITVSDFDECASADDNDCDPNANCTNTAGSFTCECDTELYDNSPNTEEPGRVCIAPCDPGLCTRPNEICNNGGTIEDDNLCKCIEGYDYTQYGDCDPMARSTDFRCYHCEDSIDNVKCNGRMESENGTARQCPNPTDTCYQTIQMNPEGDGFMIRKGCMNLEDCYDLLYSYEADPAKASCFEYIFPYGQDTPPGPGVQCHYCCSEYFPLDLCNYDSIHFIYGTPRINSWDPRMNWDLSMNLDATEEPESGSQRHLPVCGVLSLVVTTLLALMLH.

The signal sequence occupies residues 1 to 25 (MFCHLHCMLVVFSLLLTLTGSFVNA). Positions 41–80 (PPDPCASNPCTIASTHCVAAGESHTCECRPGYFETNGNCT) constitute an EGF-like 1 domain. Disulfide bonds link Cys-45-Cys-57, Cys-50-Cys-66, and Cys-68-Cys-79. Asn-78, Asn-170, and Asn-219 each carry an N-linked (GlcNAc...) asparagine glycan. The 125-residue stretch at 81-205 (VAQQFAGSFS…STITVSDFDE (125 aa)) folds into the SEA domain. The region spanning 202–250 (DFDECASADDNDCDPNANCTNTAGSFTCECDTELYDNSPNTEEPGRVCI) is the EGF-like 2; calcium-binding domain. 6 disulfides stabilise this stretch: Cys-206–Cys-220, Cys-214–Cys-229, Cys-231–Cys-249, Cys-253–Cys-265, Cys-258–Cys-277, and Cys-279–Cys-291. Positions 249 to 292 (CIAPCDPGLCTRPNEICNNGGTIEDDNLCKCIEGYDYTQYGDCD) constitute an EGF-like 3 domain. Asn-322 carries N-linked (GlcNAc...) asparagine glycosylation. Gly-446 carries GPI-anchor amidated glycine lipidation. Residues 447-470 (SQRHLPVCGVLSLVVTTLLALMLH) constitute a propeptide, removed in mature form.

In terms of tissue distribution, sperm.

Its subcellular location is the cell projection. It localises to the cilium. It is found in the flagellum membrane. This chain is 63 kDa sperm flagellar membrane protein, found in Strongylocentrotus purpuratus (Purple sea urchin).